We begin with the raw amino-acid sequence, 348 residues long: Dihydroorotase (348 aa).

Residues His17 and His19 each contribute to the Zn(2+) site. Residues 19 to 21 (HLR) and Asn45 each bind substrate. The Zn(2+) site is built by Lys103, His140, and His178. Lys103 carries the post-translational modification N6-carboxylysine. Position 140 (His140) interacts with substrate. A substrate-binding site is contributed by Leu223. Asp251 is a binding site for Zn(2+). Asp251 is a catalytic residue. Substrate contacts are provided by His255 and Ala267.

The protein belongs to the metallo-dependent hydrolases superfamily. DHOase family. Class II DHOase subfamily. Homodimer. Zn(2+) is required as a cofactor.

It carries out the reaction (S)-dihydroorotate + H2O = N-carbamoyl-L-aspartate + H(+). It participates in pyrimidine metabolism; UMP biosynthesis via de novo pathway; (S)-dihydroorotate from bicarbonate: step 3/3. In terms of biological role, catalyzes the reversible cyclization of carbamoyl aspartate to dihydroorotate. This Shigella flexneri protein is Dihydroorotase.